A 98-amino-acid polypeptide reads, in one-letter code: Co-chaperonin GroES (98 aa).

This sequence belongs to the GroES chaperonin family. In terms of assembly, heptamer of 7 subunits arranged in a ring. Interacts with the chaperonin GroEL.

The protein resides in the cytoplasm. Functionally, together with the chaperonin GroEL, plays an essential role in assisting protein folding. The GroEL-GroES system forms a nano-cage that allows encapsulation of the non-native substrate proteins and provides a physical environment optimized to promote and accelerate protein folding. GroES binds to the apical surface of the GroEL ring, thereby capping the opening of the GroEL channel. The chain is Co-chaperonin GroES from Bartonella quintana (strain Toulouse) (Rochalimaea quintana).